An 88-amino-acid polypeptide reads, in one-letter code: MMLKMGAMFVLLLLFILPSSQQEGDVQARKTHLKSGFYGTLAMSTRGCSGTCRRHRDGKCRGTCECSGYSYCRCGDAHHFYRGCTCTC.

The first 21 residues, 1–21, serve as a signal peptide directing secretion; the sequence is MMLKMGAMFVLLLLFILPSSQ. Positions 22 to 46 are excised as a propeptide; the sequence is QEGDVQARKTHLKSGFYGTLAMSTR.

This sequence belongs to the conotoxin S superfamily. Post-translationally, contains 5 disulfide bonds. Expressed by the venom duct.

The protein resides in the secreted. The polypeptide is Conotoxin Ca8.3 (Conus caracteristicus (Characteristic cone)).